We begin with the raw amino-acid sequence, 286 residues long: MLSLDAARDFNGHIVNADSMQLYRDMDIGTAKLSHSARQGIPHHQIDVIDPSSEASVARYKLSAQTCIKHIHALNSIPFLVGGSGLYVSSVVHNLQFPPTDGRVRKLLEDEADKSGIGVLHDRLLKLHPGFTVSRGNRRRIIRALEVAYITGRSPNPVLPLQNRANNFIVINLICDKGTLDIRLQKRVESFYDNGLIDEVRLLQEKYVLGRTAAKAIGYKQAIMYLAGEISCADAKDSTLQETIRLANKQIKWFRRYSGQHIVDTTDMSVAYEQIRSILNKSFRIS.

An interaction with substrate tRNA region spans residues 18–21 (DSMQ).

This sequence belongs to the IPP transferase family. As to quaternary structure, monomer. Mg(2+) serves as cofactor.

It carries out the reaction adenosine(37) in tRNA + dimethylallyl diphosphate = N(6)-dimethylallyladenosine(37) in tRNA + diphosphate. Its function is as follows. Catalyzes the transfer of a dimethylallyl group onto the adenine at position 37 in tRNAs that read codons beginning with uridine, leading to the formation of N6-(dimethylallyl)adenosine (i(6)A). The protein is tRNA dimethylallyltransferase of Tropheryma whipplei (strain TW08/27) (Whipple's bacillus).